We begin with the raw amino-acid sequence, 68 residues long: Copper transport protein ATOX1 (68 aa).

An HMA domain is found at 1–63 (MPKHEFSVDM…TLGKTGKAVS (63 aa)). Cu cation-binding residues include cysteine 12 and cysteine 15. A Phosphoserine modification is found at serine 47. N6-acetyllysine is present on lysine 60.

The protein belongs to the ATX1 family. Homodimer. Interacts with ATP7B. Interacts with ATP7A. Interacts (via dimer form) with SLC31A1 (via C-terminal domain); this interaction improves ATOX1 stability and controls intracellular Cu(I) levels.

Its function is as follows. Binds and deliver cytosolic copper to the copper ATPase proteins. May be important in cellular antioxidant defense. This Bos taurus (Bovine) protein is Copper transport protein ATOX1.